Here is a 712-residue protein sequence, read N- to C-terminus: Sterol uptake control protein 2 (712 aa).

The segment covering 1 to 19 has biased composition (polar residues); the sequence is MMMTVKQESPNSTLNTSEF. The interval 1–52 is disordered; sequence MMMTVKQESPNSTLNTSEFSSDENLKTNNSEPPKKVSKSSTGKRKYHQKSRN. A compositionally biased stretch (basic residues) spans 35–50; that stretch reads KVSKSSTGKRKYHQKS. The segment at residues 54-81 is a DNA-binding region (zn(2)-C6 fungal-type); sequence CSTCKKRRVKCDEQRPVCGNCTKLKLDC. Disordered stretches follow at residues 95 to 150 and 236 to 342; these read KKDI…VIPP and TTVP…ANPL. 3 stretches are compositionally biased toward polar residues: residues 113 to 143, 252 to 306, and 326 to 337; these read STVS…QDIK, RKSQ…SGSP, and KSLPNISPNMSI.

The protein localises to the nucleus. Functionally, transcription factor involved in the regulation of ergosterol biosynthetic genes such as ERG2 and ERG11 through direct binding to sterol response elements (SREs) in the promoters. Also binds to its own promoter on 2 cis-acting elements to promote autoregulation. Regulates sterol uptake across the plasma membrane. Acts as a major regulator of ascorbic acid-induced response. Plays a role in the triggering of pyroptosis, an inflammasome-mediated programmed cell death pathway in macrophages, allowing macrophages escaping. The sequence is that of Sterol uptake control protein 2 from Candida albicans (strain SC5314 / ATCC MYA-2876) (Yeast).